We begin with the raw amino-acid sequence, 392 residues long: MKLHEYQAKGLFRDYGVSVPDGIVAETVDAAVDAARRLEEENDATLFIVKAQIHAGGRGKGGGVKLAHSVEEVREHADNILGMDLVTHQTGPEGQTVRKILVTEGVDIDQEYYLGVTLDRETSMNAIMVSTEGGVDIETVAEESPEKIQRVWVDPSIGLRPFQTRQLAFAMGLEGDAFKQAVASIQGLYEAFEENDCTLAEINPLVQTPGGDIEAVDAKVNLDDNALFRHPDLEEMRDLHEEDPTEVKAGEHGLSYITLDGNVGCMVNGAGLAMATMDIIKLAGGEPANFLDVGGAASAETVEAGFRIILEDPNVEALLLNIFGGIVRCDRVAQGVIEAAKNIDIDVPLIVRLQGTNAEEGKRLLDESDLSLRSAVLLKEAADEVTAALGED.

The 240-residue stretch at 9–248 folds into the ATP-grasp domain; the sequence is KGLFRDYGVS…LHEEDPTEVK (240 aa). Residues K50, 57-59, V106, and E111 contribute to the ATP site; that span reads GRG. Residues N203 and D217 each coordinate Mg(2+). Substrate contacts are provided by residues N268 and 325–327; that span reads GIV.

This sequence belongs to the succinate/malate CoA ligase beta subunit family. In terms of assembly, heterotetramer of two alpha and two beta subunits. It depends on Mg(2+) as a cofactor.

The enzyme catalyses succinate + ATP + CoA = succinyl-CoA + ADP + phosphate. It catalyses the reaction GTP + succinate + CoA = succinyl-CoA + GDP + phosphate. It participates in carbohydrate metabolism; tricarboxylic acid cycle; succinate from succinyl-CoA (ligase route): step 1/1. Its function is as follows. Succinyl-CoA synthetase functions in the citric acid cycle (TCA), coupling the hydrolysis of succinyl-CoA to the synthesis of either ATP or GTP and thus represents the only step of substrate-level phosphorylation in the TCA. The beta subunit provides nucleotide specificity of the enzyme and binds the substrate succinate, while the binding sites for coenzyme A and phosphate are found in the alpha subunit. This chain is Succinate--CoA ligase [ADP-forming] subunit beta, found in Salinibacter ruber (strain DSM 13855 / M31).